The following is a 342-amino-acid chain: Antihemorrhagic factor cHLP-B (342 aa).

The first 19 residues, 1 to 19, serve as a signal peptide directing secretion; the sequence is MNSLVALVLLGQMIGSTLS. Cystatin fetuin-A-type domains are found at residues 20-129 and 140-253; these read HHLQ…AKCH and RNCP…SDCV. 6 cysteine pairs are disulfide-bonded: cysteine 28-cysteine 333, cysteine 85-cysteine 96, cysteine 110-cysteine 128, cysteine 142-cysteine 145, cysteine 204-cysteine 216, and cysteine 229-cysteine 252. N-linked (GlcNAc...) asparagine glycosylation is present at asparagine 95. Asparagine 203 carries N-linked (GlcNAc...) asparagine glycosylation. N-linked (GlcNAc...) asparagine glycans are attached at residues asparagine 281 and asparagine 292.

It belongs to the fetuin family. In terms of assembly, homodimer. In terms of tissue distribution, expressed by the liver.

The protein resides in the secreted. Potent inhibitor of hemorrhagic activity but also proteolytic activities. Inhibition occurs by formation of a non-covalent complex between this protein and the proteinases at their metalloproteinase domains. This Gloydius brevicauda (Korean slamosa snake) protein is Antihemorrhagic factor cHLP-B.